Here is a 440-residue protein sequence, read N- to C-terminus: ATP-dependent protease ATPase subunit HslU (440 aa).

Residues Ile18, 60-65 (GVGKTE), Asp252, Glu318, and Arg390 each bind ATP.

Belongs to the ClpX chaperone family. HslU subfamily. As to quaternary structure, a double ring-shaped homohexamer of HslV is capped on each side by a ring-shaped HslU homohexamer. The assembly of the HslU/HslV complex is dependent on binding of ATP.

It is found in the cytoplasm. Functionally, ATPase subunit of a proteasome-like degradation complex; this subunit has chaperone activity. The binding of ATP and its subsequent hydrolysis by HslU are essential for unfolding of protein substrates subsequently hydrolyzed by HslV. HslU recognizes the N-terminal part of its protein substrates and unfolds these before they are guided to HslV for hydrolysis. This Acidithiobacillus ferrooxidans (strain ATCC 23270 / DSM 14882 / CIP 104768 / NCIMB 8455) (Ferrobacillus ferrooxidans (strain ATCC 23270)) protein is ATP-dependent protease ATPase subunit HslU.